The primary structure comprises 922 residues: TBC1 domain family member 2A (922 aa).

A disordered region spans residues 1 to 37 (MEDAPERTPSSSESTQPPGLAREPEVVSPGDSEGCAR). Residues 1–168 (MEDAPERTPS…AENGPTLHLK (168 aa)) are interaction with CADH1. A compositionally biased stretch (polar residues) spans 8-17 (TPSSSESTQP). One can recognise a PH domain in the interval 43-141 (PKKLCGYLSK…WLQQLQMKRW (99 aa)). The disordered stretch occupies residues 228-297 (NKQAQAAAHG…KRQSNTFPFF (70 aa)). Over residues 262-271 (LPEKEPEDPA) the composition is skewed to basic and acidic residues. Residues 275–295 (PRSSVPSGPTQKPKRQSNTFP) are compositionally biased toward polar residues. The interaction with RAC1 stretch occupies residues 298–435 (SDGLARSRTA…QKLTEDLAQP (138 aa)). Coiled-coil stretches lie at residues 302–333 (ARSR…ELVI), 362–417 (LELV…NHAK), and 443–476 (FLSQ…QVTK). One can recognise a Rab-GAP TBC domain in the interval 619–811 (GVPREHRPRV…RVWDAFLYEG (193 aa)). A coiled-coil region spans residues 869 to 904 (MKQLRQLRAAHRERLEAELRELELLKVEYLQRRASL). Ser914 is modified (phosphoserine).

In terms of assembly, interacts with activated RAC1 and CDH1.

The protein resides in the cytoplasm. The protein localises to the cytoplasmic vesicle. It localises to the cell junction. Functionally, acts as a GTPase-activating protein for RAB7A. Signal effector acting as a linker between RAC1 and RAB7A, leading to RAB7A inactivation and subsequent inhibition of cadherin degradation and reduced cell-cell adhesion. The sequence is that of TBC1 domain family member 2A (Tbc1d2) from Mus musculus (Mouse).